A 138-amino-acid chain; its full sequence is Acidic phospholipase A2 beta (138 aa).

The first 16 residues, 1 to 16 (MRTLWIVAVLLLGVEG), serve as a signal peptide directing secretion. 7 cysteine pairs are disulfide-bonded: cysteine 42–cysteine 131, cysteine 44–cysteine 60, cysteine 59–cysteine 111, cysteine 65–cysteine 138, cysteine 66–cysteine 104, cysteine 73–cysteine 97, and cysteine 91–cysteine 102. Residues tyrosine 43, glycine 45, and glycine 47 each contribute to the Ca(2+) site. Histidine 63 is a catalytic residue. Aspartate 64 serves as a coordination point for Ca(2+). Residue aspartate 105 is part of the active site.

It belongs to the phospholipase A2 family. Group II subfamily. D49 sub-subfamily. Dimer. It depends on Ca(2+) as a cofactor. In terms of tissue distribution, expressed by the venom gland.

The protein resides in the secreted. The enzyme catalyses a 1,2-diacyl-sn-glycero-3-phosphocholine + H2O = a 1-acyl-sn-glycero-3-phosphocholine + a fatty acid + H(+). Functionally, PLA2 catalyzes the calcium-dependent hydrolysis of the 2-acyl groups in 3-sn-phosphoglycerides. In Crotalus adamanteus (Eastern diamondback rattlesnake), this protein is Acidic phospholipase A2 beta.